A 326-amino-acid chain; its full sequence is MGVSAEPRSLSVAGAGLASPVIEKARSALLQSQDVEDTVETLMLHPVIKAFLCGSISGTCSTLLFQPLDLLKTRLQALQPSDLGPRRVGMLAVFLKVVRTESLLGLWKGMSPSIVRCVPGVGIYFGTLYSSKQYFLRGHPPTALESVILGMGSRSVAGVCMSPITVIKTRYESGTYSYESIYAALRSIYCSEGHRGLFRGLTATLLRDAPFSGLYLMFYSQTRTAVLHGTAQLDAALIPLINFSCGIFAGVLASLVTQPADVIKTHMQLSPVKFQWIGQAATLIFKNHGLRGFFHGSVPRALRRTLMAAMAWTVYEEMMARMGLKS.

Solcar repeat units lie at residues 45 to 134 (HPVI…SKQY), 141 to 225 (PTAL…TRTA), and 237 to 321 (LIPL…MMAR). 6 helical membrane passes run 51 to 76 (FLCG…TRLQ), 109 to 135 (GMSP…KQYF), 147 to 172 (VILG…TRYE), 200 to 223 (GLTA…SQTR), 241 to 267 (INFS…KTHM), and 296 to 314 (GSVP…AWTV).

It belongs to the mitochondrial carrier (TC 2.A.29) family. SLC25A38 subfamily.

The protein localises to the mitochondrion inner membrane. The enzyme catalyses glycine(in) = glycine(out). In terms of biological role, mitochondrial glycine transporter that imports glycine into the mitochondrial matrix. Plays an important role in providing glycine for the first enzymatic step in heme biosynthesis, the condensation of glycine with succinyl-CoA to produce 5-aminolevulinate (ALA) in the mitochondrial matrix. Required during erythropoiesis. Functionally, plays a role as pro-apoptotic protein that induces caspase-dependent apoptosis. This chain is Mitochondrial glycine transporter, found in Mus musculus (Mouse).